Here is a 317-residue protein sequence, read N- to C-terminus: MTQTLPVGLSATSVVAASSANLGPGFDSLGIALSLYDEIVVETVESGLTVHVEGEGAGQVPLDQTHLVVRAINKGLQAAGFSAPGLVVRCRNDIPHSRGLGSSAAAVVGGLAAVNGLVTQAGSEPMDDARLIQLSSEFEGHPDNAAAAVLGGAVVSWTEQAGAFGGEPRYSAVPVRLHPDIRLFPAVPQQRSSTAETRVLLPEQVSHVDARFNLSRAALLVVALSERPDLLMAATEDVLHQPQRAAAMPASAEYLAILRRCGIAAVLSGAGPSVLGLSAQSGLPAEALEYGTAHGFTVTEMSVGAGVRWTAGAVVRN.

ATP is bound at residue 95 to 105 (PHSRGLGSSAA).

It belongs to the GHMP kinase family. Homoserine kinase subfamily.

It is found in the cytoplasm. It carries out the reaction L-homoserine + ATP = O-phospho-L-homoserine + ADP + H(+). Its pathway is amino-acid biosynthesis; L-threonine biosynthesis; L-threonine from L-aspartate: step 4/5. Functionally, catalyzes the ATP-dependent phosphorylation of L-homoserine to L-homoserine phosphate. The polypeptide is Homoserine kinase (Mycolicibacterium smegmatis (strain ATCC 700084 / mc(2)155) (Mycobacterium smegmatis)).